Here is a 506-residue protein sequence, read N- to C-terminus: Exopolysaccharide phosphotransferase NFA_48680 (506 aa).

Positions 484–506 (PAPWERVSAPSRRPLPESTAGAA) are disordered.

This sequence belongs to the stealth family.

This Nocardia farcinica (strain IFM 10152) protein is Exopolysaccharide phosphotransferase NFA_48680.